The following is a 400-amino-acid chain: CinA-like protein (400 aa).

The protein belongs to the CinA family.

This is CinA-like protein from Escherichia coli (strain SMS-3-5 / SECEC).